The following is a 290-amino-acid chain: Cbb3-type cytochrome c oxidase subunit FixP (290 aa).

Residues 1–32 (MTDHSEFDSVSGKTTTGHEWDGIKELNTPLPR) are Cytoplasmic-facing. Residues 33 to 53 (WWVICFYLTIVWAIGYWIVYP) traverse the membrane as a helical segment. Residues 54 to 290 (AWPLISSNTT…VYVHSLGGGK (237 aa)) lie on the Periplasmic side of the membrane. 2 consecutive Cytochrome c domains span residues 109–198 (LARA…RSLS) and 206–287 (YDAA…HSLG). The heme c site is built by cysteine 122, cysteine 125, histidine 126, methionine 173, cysteine 219, cysteine 222, histidine 223, and methionine 264.

It belongs to the CcoP / FixP family. Component of the cbb3-type cytochrome c oxidase at least composed of FixN, FixO, FixQ and FixP. It depends on heme c as a cofactor.

The protein resides in the cell inner membrane. It participates in energy metabolism; oxidative phosphorylation. In terms of biological role, C-type cytochrome. Part of the cbb3-type cytochrome c oxidase complex. FixP subunit is required for transferring electrons from donor cytochrome c via its heme groups to FixO subunit. From there, electrons are shuttled to the catalytic binuclear center of FixN subunit where oxygen reduction takes place. The complex also functions as a proton pump. The polypeptide is Cbb3-type cytochrome c oxidase subunit FixP (Bradyrhizobium diazoefficiens (strain JCM 10833 / BCRC 13528 / IAM 13628 / NBRC 14792 / USDA 110)).